Reading from the N-terminus, the 633-residue chain is Molybdenum cofactor biosynthesis protein 1 (633 aa).

Positions 1–380 (MAAQPVSRVV…QMKNRPMILI (380 aa)) are molybdenum cofactor biosynthesis protein A. The residue at position 61 (Ser61) is a Phosphoserine. The region spanning 61–295 (SFGRHHSYLR…AKAFKIPGFR (235 aa)) is the Radical SAM core domain. Arg70 provides a ligand contact to GTP. [4Fe-4S] cluster is bound by residues Cys77 and Cys81. Tyr83 is an S-adenosyl-L-methionine binding site. Position 84 (Cys84) interacts with [4Fe-4S] cluster. Residue Arg120 participates in GTP binding. Residue Gly124 participates in S-adenosyl-L-methionine binding. Thr151 contributes to the GTP binding site. Ser175 is a binding site for S-adenosyl-L-methionine. An N6-acetyllysine modification is found at Lys195. Lys212 provides a ligand contact to GTP. Residue Met246 participates in S-adenosyl-L-methionine binding. Residues Cys309 and Cys312 each contribute to the [4Fe-4S] cluster site. 314–316 (RLR) serves as a coordination point for GTP. Cys326 is a [4Fe-4S] cluster binding site. Residues 410–633 (VSFSSQMVTL…GGQRGDFHRT (224 aa)) are molybdenum cofactor biosynthesis protein C. The interval 446–480 (SSHLDSDANPKCLSPTEPQAPAASSGPLPDSDQLT) is disordered. Residue Lys525 is modified to N6-acetyllysine. Asp603 acts as the For molybdenum cofactor biosynthesis protein C activity in catalysis.

In the C-terminal section; belongs to the MoaC family. It in the N-terminal section; belongs to the radical SAM superfamily. MoaA family. In terms of assembly, isoform MOCS1A and isoform MOCS1B probably form a heterooligomer. It depends on [4Fe-4S] cluster as a cofactor.

The catalysed reaction is GTP + AH2 + S-adenosyl-L-methionine = (8S)-3',8-cyclo-7,8-dihydroguanosine 5'-triphosphate + 5'-deoxyadenosine + L-methionine + A + H(+). The enzyme catalyses (8S)-3',8-cyclo-7,8-dihydroguanosine 5'-triphosphate = cyclic pyranopterin phosphate + diphosphate. It participates in cofactor biosynthesis; molybdopterin biosynthesis. In terms of biological role, isoform MOCS1A and isoform MOCS1B probably form a complex that catalyzes the conversion of 5'-GTP to cyclic pyranopterin monophosphate (cPMP). MOCS1A catalyzes the cyclization of GTP to (8S)-3',8-cyclo-7,8-dihydroguanosine 5'-triphosphate and MOCS1B catalyzes the subsequent conversion of (8S)-3',8-cyclo-7,8-dihydroguanosine 5'-triphosphate to cPMP. This Bos taurus (Bovine) protein is Molybdenum cofactor biosynthesis protein 1 (MOCS1).